The following is a 208-amino-acid chain: uncharacterized protein (208 aa).

The tract at residues 126-151 (VGSGSGSDSSSGSTSSPNTVNNYNSD) is disordered. A compositionally biased stretch (low complexity) spans 131 to 141 (GSDSSSGSTSS).

This is an uncharacterized protein from Dictyostelium discoideum (Social amoeba).